Here is a 202-residue protein sequence, read N- to C-terminus: dITP/XTP pyrophosphatase (202 aa).

Position 7–12 (7–12) interacts with substrate; it reads SRNEAK. The active-site Proton acceptor is the aspartate 68. Residue aspartate 68 participates in Mg(2+) binding. Substrate-binding positions include serine 69, 156-159, lysine 179, and 184-185; these read FGYD and HR.

This sequence belongs to the HAM1 NTPase family. As to quaternary structure, homodimer. The cofactor is Mg(2+).

It carries out the reaction XTP + H2O = XMP + diphosphate + H(+). It catalyses the reaction dITP + H2O = dIMP + diphosphate + H(+). The catalysed reaction is ITP + H2O = IMP + diphosphate + H(+). In terms of biological role, pyrophosphatase that catalyzes the hydrolysis of nucleoside triphosphates to their monophosphate derivatives, with a high preference for the non-canonical purine nucleotides XTP (xanthosine triphosphate), dITP (deoxyinosine triphosphate) and ITP. Seems to function as a house-cleaning enzyme that removes non-canonical purine nucleotides from the nucleotide pool, thus preventing their incorporation into DNA/RNA and avoiding chromosomal lesions. The polypeptide is dITP/XTP pyrophosphatase (Frankia alni (strain DSM 45986 / CECT 9034 / ACN14a)).